The following is a 177-amino-acid chain: Probable DNA-directed RNA polymerase subunit delta (177 aa).

The 68-residue stretch at 14-81 (CSMIEVVHSV…GENRWGLRSW (68 aa)) folds into the HTH HARE-type domain. A disordered region spans residues 90–177 (EILPQPKPKK…ETEEEEEEEL (88 aa)). Residues 106 to 177 (DGFDDYIEED…ETEEEEEEEL (72 aa)) are compositionally biased toward acidic residues.

This sequence belongs to the RpoE family. RNAP is composed of a core of 2 alpha, a beta and a beta' subunits. The core is associated with a delta subunit and one of several sigma factors.

Participates in both the initiation and recycling phases of transcription. In the presence of the delta subunit, RNAP displays an increased specificity of transcription, a decreased affinity for nucleic acids, and an increased efficiency of RNA synthesis because of enhanced recycling. The protein is Probable DNA-directed RNA polymerase subunit delta of Bacillus cereus (strain B4264).